Here is a 405-residue protein sequence, read N- to C-terminus: Prostaglandin E2 receptor EP1 subtype (405 aa).

Over 1–39 the chain is Extracellular; it reads MSPCGLNLSLADEAATCATPRLPNTSVVLPTGDNGTSPA. Residues Asn7, Asn24, and Asn34 are each glycosylated (N-linked (GlcNAc...) asparagine). A helical membrane pass occupies residues 40 to 62; it reads LPIFSMTLGAVSNVLALALLAQV. The Cytoplasmic portion of the chain corresponds to 63 to 80; sequence AGRMRRRRSAATFLLFVA. Residues 81–99 traverse the membrane as a helical segment; it reads SLLAIDLAGHVIPGALVLR. At 100–113 the chain is on the extracellular side; that stretch reads LYTAGRAPAGGACH. A disulfide bridge connects residues Cys112 and Cys190. The chain crosses the membrane as a helical span at residues 114-135; that stretch reads FLGGCMVFFGLCPLLLGCGMAV. Residues 136 to 157 lie on the Cytoplasmic side of the membrane; the sequence is ERCVGVTQPLIHAARVSVARAR. Residues 158-179 traverse the membrane as a helical segment; the sequence is LALAVLAAMALAVALLPLVHVG. Residues 180-202 lie on the Extracellular side of the membrane; that stretch reads RYELQYPGTWCFISLGPRGGWRQ. The chain crosses the membrane as a helical span at residues 203–228; the sequence is ALLAGLFAGLGLAALLAALVCNTLSG. Residues 229–301 lie on the Cytoplasmic side of the membrane; sequence LALLRARWRR…HAHDVEMVGQ (73 aa). The tract at residues 243-287 is disordered; sequence RFRKTAGPDDRRRWGSRGPRLASASSASSITSATATLRSSRGGGS. Low complexity predominate over residues 262–282; sequence RLASASSASSITSATATLRSS. The chain crosses the membrane as a helical span at residues 302–323; sequence LVGIMVVSCICWSPLLVLVVLA. Topologically, residues 324–337 are extracellular; it reads IGGWNSNSLQRPLF. The helical transmembrane segment at 338-357 threads the bilayer; that stretch reads LAVRLASWNQILDPWVYILL. The Cytoplasmic portion of the chain corresponds to 358-405; it reads RQAMLRQLLRLLPLRVSAKGGPTELGLTKSAWEASSLRSSRHSGFSHL.

It belongs to the G-protein coupled receptor 1 family. Phosphorylated. Abundant in kidney and in a lesser amount in lung.

It localises to the cell membrane. In terms of biological role, receptor for prostaglandin E2 (PGE2). The activity of this receptor is mediated by G(q) proteins which activate a phosphatidylinositol-calcium second messenger system. May play a role as an important modulator of renal function. Implicated the smooth muscle contractile response to PGE2 in various tissues. This is Prostaglandin E2 receptor EP1 subtype (Ptger1) from Mus musculus (Mouse).